Consider the following 217-residue polypeptide: Probable transaldolase (217 aa).

Lys83 serves as the catalytic Schiff-base intermediate with substrate.

Belongs to the transaldolase family. Type 3B subfamily.

The protein resides in the cytoplasm. The catalysed reaction is D-sedoheptulose 7-phosphate + D-glyceraldehyde 3-phosphate = D-erythrose 4-phosphate + beta-D-fructose 6-phosphate. It functions in the pathway carbohydrate degradation; pentose phosphate pathway; D-glyceraldehyde 3-phosphate and beta-D-fructose 6-phosphate from D-ribose 5-phosphate and D-xylulose 5-phosphate (non-oxidative stage): step 2/3. Its function is as follows. Transaldolase is important for the balance of metabolites in the pentose-phosphate pathway. The sequence is that of Probable transaldolase from Rhizobium meliloti (strain 1021) (Ensifer meliloti).